We begin with the raw amino-acid sequence, 167 residues long: Putative pre-16S rRNA nuclease (167 aa).

Belongs to the YqgF nuclease family.

Its subcellular location is the cytoplasm. Could be a nuclease involved in processing of the 5'-end of pre-16S rRNA. This Streptomyces coelicolor (strain ATCC BAA-471 / A3(2) / M145) protein is Putative pre-16S rRNA nuclease.